A 91-amino-acid chain; its full sequence is Potassium channel toxin AaTXK-beta (91 aa).

An N-terminal signal peptide occupies residues 1–19 (MQRNLVVLLFLGMVALSSC). Residues 20–27 (GLREKHVQ) constitute a propeptide that is removed on maturation. Residues 54–91 (QFGCPAYQGYCDDHCQDIKKEEGFCHGFKCKCGIPMGF) form the BetaSPN-type CS-alpha/beta domain. Cystine bridges form between Cys57–Cys78, Cys64–Cys83, and Cys68–Cys85.

Belongs to the long chain scorpion toxin family. Class 1 subfamily. Monomer (both chains). As to expression, expressed by the venom gland.

The protein resides in the secreted. Functionally, inhibits voltage-gated potassium channels (Kv). Does not activate Kv7 channels. Peptide activator of Kv7.4/KCNQ4 channels. Also acts as a subtype-selective activator of channels formed by Kv7.3/KCNQ3, Kv7.2/Kv7.3 (KCNQ2/KCNQ3), Kv7.5/Kv7.3 (KCNQ3/KCNQ5) subunits. The sequence is that of Potassium channel toxin AaTXK-beta from Androctonus australis (Sahara scorpion).